The primary structure comprises 300 residues: Protein N-terminal and lysine N-methyltransferase EFM7 (300 aa).

S-adenosyl-L-methionine contacts are provided by residues W75, 101–103 (GAG), D123, W156, and S179.

The protein belongs to the class I-like SAM-binding methyltransferase superfamily. EFM7 family.

The protein resides in the cytoplasm. In terms of biological role, S-adenosyl-L-methionine-dependent protein methyltransferase that trimethylates the N-terminal glycine 'Gly-2' of elongation factor 1-alpha, before also catalyzing the mono- and dimethylation of 'Lys-3'. This is Protein N-terminal and lysine N-methyltransferase EFM7 from Cryptococcus neoformans var. neoformans serotype D (strain JEC21 / ATCC MYA-565) (Filobasidiella neoformans).